The sequence spans 334 residues: Isopentenyl-diphosphate delta-isomerase (334 aa).

5-6 (RK) is a substrate binding site. FMN is bound by residues 60–62 (AMT), serine 90, and asparagine 117. Substrate is bound at residue glutamine 147. Glutamate 148 is a Mg(2+) binding site. FMN-binding positions include lysine 179, serine 204, threonine 209, 253 to 255 (GVR), and 274 to 275 (SR).

The protein belongs to the IPP isomerase type 2 family. Homooctamer. Dimer of tetramers. FMN serves as cofactor. It depends on NADPH as a cofactor. The cofactor is Mg(2+).

It is found in the cytoplasm. The catalysed reaction is isopentenyl diphosphate = dimethylallyl diphosphate. Its function is as follows. Involved in the biosynthesis of isoprenoids. Catalyzes the 1,3-allylic rearrangement of the homoallylic substrate isopentenyl (IPP) to its allylic isomer, dimethylallyl diphosphate (DMAPP). This chain is Isopentenyl-diphosphate delta-isomerase, found in Streptococcus gordonii (strain Challis / ATCC 35105 / BCRC 15272 / CH1 / DL1 / V288).